Here is a 617-residue protein sequence, read N- to C-terminus: Thioredoxin reductase (617 aa).

Residues 127 to 128 (PG), 147 to 150 (DYVK), 163 to 164 (TC), 168 to 172 (GCVPK), alanine 237, aspartate 433, and 440 to 442 (ELA) contribute to the FAD site. The cysteines at positions 164 and 169 are disulfide-linked. Residues 514 to 528 (HRQKHIRAQKDEYDL) form a loop important for the interaction with TRX1 region. Histidine 585 is a binding site for FAD. Histidine 585 serves as the catalytic Proton acceptor. Cysteine 611 and cysteine 616 form a disulfide bridge.

Belongs to the class-I pyridine nucleotide-disulfide oxidoreductase family. Homodimer. Requires FAD as cofactor.

It localises to the mitochondrion. Its subcellular location is the cytoplasm. The catalysed reaction is [thioredoxin]-dithiol + NADP(+) = [thioredoxin]-disulfide + NADPH + H(+). Catalyzes the transfer of electrons from NADPH to thioredoxins TRX1, TRX2 and TRX3, which in turn act as reductants of disulfide containing proteins. Able to reduce nitroglutathione (GSNO), a compound involved in the transport of nitric oxide (NO); however, TRX1 is more efficient in reducing GSNO. Has no catalytic activity towards oxidized glutathione (GSSG). This Plasmodium falciparum (isolate 3D7) protein is Thioredoxin reductase.